The following is a 266-amino-acid chain: uncharacterized protein (266 aa).

Positions 1–22 (MGYFKRVVLYIIVMVVSVFIIG) are cleaved as a signal peptide. Residue Cys-23 is the site of N-palmitoyl cysteine attachment. Residue Cys-23 is the site of S-diacylglycerol cysteine attachment.

Belongs to the staphylococcal tandem lipoprotein family.

Its subcellular location is the cell membrane. This is an uncharacterized protein from Staphylococcus aureus (strain N315).